Reading from the N-terminus, the 332-residue chain is Succinylglutamate desuccinylase (332 aa).

H59, E62, and H151 together coordinate Zn(2+). The active site involves E215.

This sequence belongs to the AspA/AstE family. Succinylglutamate desuccinylase subfamily. It depends on Zn(2+) as a cofactor.

The catalysed reaction is N-succinyl-L-glutamate + H2O = L-glutamate + succinate. It functions in the pathway amino-acid degradation; L-arginine degradation via AST pathway; L-glutamate and succinate from L-arginine: step 5/5. Transforms N(2)-succinylglutamate into succinate and glutamate. This is Succinylglutamate desuccinylase from Pseudomonas paraeruginosa (strain DSM 24068 / PA7) (Pseudomonas aeruginosa (strain PA7)).